Consider the following 20-residue polypeptide: Mite allergen Der p 6 (20 aa).

The region spanning 1 to 20 is the Peptidase S1 domain; it reads AIGXQPAAEAEAPFQISLMK.

The protein belongs to the peptidase S1 family.

The protein resides in the secreted. In terms of biological role, protease that shows specificity similar to chymotrypsin. The polypeptide is Mite allergen Der p 6 (DERP6) (Dermatophagoides pteronyssinus (European house dust mite)).